The following is a 404-amino-acid chain: Mevalonate kinase (404 aa).

ATP contacts are provided by residues lysine 12, serine 130, and 135 to 141 (GAGLGSS). Serine 141 and glutamate 184 together coordinate Mg(2+). Residue aspartate 195 is the Proton acceptor of the active site.

The protein belongs to the GHMP kinase family. Mevalonate kinase subfamily. Homodimer. Mg(2+) serves as cofactor.

The protein localises to the cytoplasm. It is found in the nucleus. The enzyme catalyses (R)-mevalonate + ATP = (R)-5-phosphomevalonate + ADP + H(+). Its pathway is isoprenoid biosynthesis; isopentenyl diphosphate biosynthesis via mevalonate pathway; isopentenyl diphosphate from (R)-mevalonate: step 1/3. Farnesyl pyrophosphate and geranyl pyrophosphate inhibit mevalonate kinase by binding competitively at the ATP-binding site. In terms of biological role, mevalonate kinase; part of the second module of ergosterol biosynthesis pathway that includes the middle steps of the pathway. Erg12 converts mevalonate into 5-phosphomevalonate. The second module is carried out in the vacuole and involves the formation of farnesyl diphosphate, which is also an important intermediate in the biosynthesis of ubiquinone, dolichol, heme and prenylated proteins. Activity by the mevalonate kinase erg12 first converts mevalonate into 5-phosphomevalonate. 5-phosphomevalonate is then further converted to 5-diphosphomevalonate by the phosphomevalonate kinase erg8. The diphosphomevalonate decarboxylase mvd1 then produces isopentenyl diphosphate. The isopentenyl-diphosphate delta-isomerase idi1 then catalyzes the 1,3-allylic rearrangement of the homoallylic substrate isopentenyl (IPP) to its highly electrophilic allylic isomer, dimethylallyl diphosphate (DMAPP). Finally the farnesyl diphosphate synthase fps1 catalyzes the sequential condensation of isopentenyl pyrophosphate with dimethylallyl pyrophosphate, and then with the resultant geranylpyrophosphate to the ultimate product farnesyl pyrophosphate. The polypeptide is Mevalonate kinase (erg12) (Schizosaccharomyces pombe (strain 972 / ATCC 24843) (Fission yeast)).